A 562-amino-acid chain; its full sequence is MENQKMPISSVSNLKDLNMISRPVANFPPSIWGDRFINYACEDENEQAQKERQVEELKEQVRRELATAIDKPLQQLNIIDATQRLGIAYHFENEIEESLKHIYLHTYVENTCFEGSDDLYSVALWFRLLRQDDYRVSCDVFKKFRDSEGNFKNSLMEDAKGLLELYEATHLSVNGEEMLDDALEFTKTHLELVVSHLNYPLAEQVRHALYQPQHKGLPRLEAVYFFRIYEAYDSHNEALLKLAKLDFNLLQSLHMKELSHMAKWWKSLDFATKFPFARDRLVEGYFWILGVYFEPQYSLARKIIIKVFTMISTIDDIYDAYGTLDELKLFTKAIQRWDIGSLDQLPEYMKPCYKSVLDVYNEIEEEMDNQGSLFRMHYAKEEMKKIVEGYMDEAKWCHEKYVPTFQEYMSVALVTAGYTFLTTISYLGMGEIASKEAFDWLFSRPPIIEASESVCRLMDDMRSHEFEQERGHVASGIECYMKQYGVTEEEAHDKFHKRLVKAWKDINEGCLRPYPMPKPLLMRILSLTRVIDVIYKNEDWYTHVKKPMKDKIASLLIDPMIV.

Residues Asp-315, Asp-319, and Glu-467 each coordinate Mg(2+). The DDXXD motif signature appears at 315–319; sequence DDIYD.

Belongs to the terpene synthase family. Tpsa subfamily. The cofactor is Mg(2+). Mn(2+) serves as cofactor.

In terms of biological role, sesquiterpene synthase. In Santalum spicatum (Australian sandalwood), this protein is Probable sesquiterpene synthase (SesquiTPS).